The primary structure comprises 293 residues: MFLRRLGGWLPRPWGRKKSTKTDLPAPEPRWVDSSPENSGSDWDSAPETMGDVGPLKTKDSGTRRPPQAAPESSRDTRVYQLGSKRMDSLKKDKAASAIQESARLETGGAVPKLDLDPVDSGGMKNLGVSPQGRLGTTGPEALLEKPGRRQKLLRWLRGEPGAPSHYLQDPEEYLQISTNLTLHLLELLASALLALCSRPLRAILDALGLRGPVGLWLHGLLCFLAALHGLHAVLSLLTAHPLHFACLFGLLQALVLAVSLREPVEDEETADWESEGQGKEAKEQTEGPGRAL.

2 disordered regions span residues 1 to 95 (MFLR…KDKA) and 268 to 293 (EETA…GRAL). Phosphoserine occurs at positions 34, 35, and 89. Basic and acidic residues-rich tracts occupy residues 85 to 95 (KRMDSLKKDKA) and 277 to 286 (GQGKEAKEQT).

This is an uncharacterized protein from Rattus norvegicus (Rat).